The sequence spans 494 residues: Alpha-amylase-related protein (494 aa).

A signal peptide spans 1–20 (MFKFASAVILCLVAASSTQA). At Q21 the chain carries Pyrrolidone carboxylic acid. C48 and C104 are disulfide-bonded. Residues N118, Q169, and D178 each coordinate Ca(2+). An intrachain disulfide couples C157 to C171. R206 contributes to the chloride binding site. Catalysis depends on D208, which acts as the Nucleophile. H212 serves as a coordination point for Ca(2+). The active-site Proton donor is the E245. 2 residues coordinate chloride: N308 and R343. 3 disulfides stabilise this stretch: C376/C382, C418/C441, and C448/C460.

This sequence belongs to the glycosyl hydrolase 13 family. In terms of assembly, monomer. Ca(2+) serves as cofactor. Requires chloride as cofactor.

It is found in the secreted. It carries out the reaction Endohydrolysis of (1-&gt;4)-alpha-D-glucosidic linkages in polysaccharides containing three or more (1-&gt;4)-alpha-linked D-glucose units.. This is Alpha-amylase-related protein (Amyrel) from Drosophila ercepeae (Fruit fly).